A 208-amino-acid polypeptide reads, in one-letter code: Small ribosomal subunit protein uS4 (208 aa).

A disordered region spans residues 31–51 (SALDKRAYGPGQHGQRRAKTS). An S4 RNA-binding domain is found at 98–160 (RRLDNVVYRM…TKSNSQVVRA (63 aa)).

It belongs to the universal ribosomal protein uS4 family. Part of the 30S ribosomal subunit. Contacts protein S5. The interaction surface between S4 and S5 is involved in control of translational fidelity.

One of the primary rRNA binding proteins, it binds directly to 16S rRNA where it nucleates assembly of the body of the 30S subunit. Functionally, with S5 and S12 plays an important role in translational accuracy. The protein is Small ribosomal subunit protein uS4 of Helicobacter pylori (strain ATCC 700392 / 26695) (Campylobacter pylori).